Here is a 419-residue protein sequence, read N- to C-terminus: Adenylosuccinate synthetase (419 aa).

GTP-binding positions include 12–18 (GDEGKGK) and 40–42 (GHT). Asp13 functions as the Proton acceptor in the catalytic mechanism. Mg(2+) contacts are provided by Asp13 and Gly40. IMP contacts are provided by residues 13–16 (DEGK), 38–41 (NAGH), Thr128, Arg142, Gln220, Thr235, and Arg299. His41 serves as the catalytic Proton donor. 295–301 (SITKRPR) provides a ligand contact to substrate. GTP-binding positions include Arg301, 327-329 (KSD), and 407-409 (SLG).

The protein belongs to the adenylosuccinate synthetase family. As to quaternary structure, homodimer. It depends on Mg(2+) as a cofactor.

The protein resides in the cytoplasm. It carries out the reaction IMP + L-aspartate + GTP = N(6)-(1,2-dicarboxyethyl)-AMP + GDP + phosphate + 2 H(+). Its pathway is purine metabolism; AMP biosynthesis via de novo pathway; AMP from IMP: step 1/2. Plays an important role in the de novo pathway of purine nucleotide biosynthesis. Catalyzes the first committed step in the biosynthesis of AMP from IMP. This is Adenylosuccinate synthetase from Azobacteroides pseudotrichonymphae genomovar. CFP2.